The chain runs to 388 residues: Pepsin A-4 (388 aa).

The first 15 residues, 1–15, serve as a signal peptide directing secretion; that stretch reads MKWLLLLGLVALSEC. Residues 16–62 constitute a propeptide, activation peptide; the sequence is IMYKVPLIRKKSLRRTLSERGLLKDFLKKHNLNPARKYFPQWEAPTL. Positions 76 to 385 constitute a Peptidase A1 domain; the sequence is YFGTIGIGTP…DRANNQVGLA (310 aa). Aspartate 94 is an active-site residue. A disulfide bridge links cysteine 107 with cysteine 112. Serine 130 bears the Phosphoserine mark. A disulfide bridge links cysteine 268 with cysteine 272. Residue aspartate 277 is part of the active site. Residues cysteine 311 and cysteine 344 are joined by a disulfide bond.

This sequence belongs to the peptidase A1 family.

The protein resides in the secreted. The catalysed reaction is Preferential cleavage: hydrophobic, preferably aromatic, residues in P1 and P1' positions. Cleaves 1-Phe-|-Val-2, 4-Gln-|-His-5, 13-Glu-|-Ala-14, 14-Ala-|-Leu-15, 15-Leu-|-Tyr-16, 16-Tyr-|-Leu-17, 23-Gly-|-Phe-24, 24-Phe-|-Phe-25 and 25-Phe-|-Tyr-26 bonds in the B chain of insulin.. Functionally, shows particularly broad specificity; although bonds involving phenylalanine and leucine are preferred, many others are also cleaved to some extent. The chain is Pepsin A-4 (PGA4) from Homo sapiens (Human).